The following is a 737-amino-acid chain: Alpha-adducin (737 aa).

Met1 is subject to N-acetylmethionine. A disordered region spans residues 1–21 (MNGDSRAAVVTSPPPTTAPHK). At Ser12 the chain carries Phosphoserine. The residue at position 59 (Ser59) is a Phosphoserine; by PKA. Ser64 is modified (phosphoserine). The residue at position 331 (Thr331) is a Phosphothreonine. Phosphoserine occurs at positions 334, 353, 355, 358, and 366. Residue Ser408 is modified to Phosphoserine; by PKA. Disordered regions lie at residues 421-486 (FASD…SAVP) and 576-737 (RREV…KSDS). Ser427 is subject to Phosphoserine. Thr429 is subject to Phosphothreonine. Residue Ser431 is modified to Phosphoserine. Ser436 is modified (phosphoserine; by PKA). Phosphothreonine; by ROCK2 is present on Thr445. Phosphoserine occurs at positions 464 and 465. Position 480 is a phosphothreonine; by ROCK2 (Thr480). At Ser481 the chain carries Phosphoserine; by PKA. The span at 576 to 601 (RREVERKQKGSEENLDEAREQKEKSP) shows a compositional bias: basic and acidic residues. 3 positions are modified to phosphoserine: Ser586, Ser600, and Ser613. Residues 602-614 (PDQPAVPHPPPST) show a composition bias toward pro residues. Residue Thr614 is modified to Phosphothreonine. A phosphoserine mark is found at Ser678, Ser707, Ser710, and Ser714. Low complexity predominate over residues 687 to 714 (PVAEEAAPSAVEEGAAADPGSDGSPGKS). Residues 715–737 (PSKKKKKFRTPSFLKKSKKKSDS) show a composition bias toward basic residues. Position 716 is a phosphoserine; by PKC (Ser716). Residues 717–734 (KKKKKFRTPSFLKKSKKK) are interaction with calmodulin. Ser726 bears the Phosphoserine; by PKA and PKC mark.

It belongs to the aldolase class II family. Adducin subfamily. As to quaternary structure, heterodimer of an alpha and a beta subunit or an alpha and a gamma subunit. In terms of tissue distribution, expressed in all tissues. Found in much higher levels in reticulocytes than the beta subunit.

It localises to the cytoplasm. Its subcellular location is the cytoskeleton. The protein resides in the cell membrane. In terms of biological role, membrane-cytoskeleton-associated protein that promotes the assembly of the spectrin-actin network. Binds to calmodulin. The polypeptide is Alpha-adducin (ADD1) (Homo sapiens (Human)).